Reading from the N-terminus, the 278-residue chain is Ribosomal RNA small subunit methyltransferase A (278 aa).

Residues asparagine 28, leucine 30, glycine 55, glutamate 77, aspartate 103, and asparagine 122 each coordinate S-adenosyl-L-methionine.

It belongs to the class I-like SAM-binding methyltransferase superfamily. rRNA adenine N(6)-methyltransferase family. RsmA subfamily.

The protein resides in the cytoplasm. It catalyses the reaction adenosine(1518)/adenosine(1519) in 16S rRNA + 4 S-adenosyl-L-methionine = N(6)-dimethyladenosine(1518)/N(6)-dimethyladenosine(1519) in 16S rRNA + 4 S-adenosyl-L-homocysteine + 4 H(+). In terms of biological role, specifically dimethylates two adjacent adenosines (A1518 and A1519) in the loop of a conserved hairpin near the 3'-end of 16S rRNA in the 30S particle. May play a critical role in biogenesis of 30S subunits. The protein is Ribosomal RNA small subunit methyltransferase A of Cereibacter sphaeroides (strain ATCC 17023 / DSM 158 / JCM 6121 / CCUG 31486 / LMG 2827 / NBRC 12203 / NCIMB 8253 / ATH 2.4.1.) (Rhodobacter sphaeroides).